A 99-amino-acid polypeptide reads, in one-letter code: U2-theraphotoxin-Lsp1a (99 aa).

The signal sequence occupies residues 1-22 (MNTIQVIIFAVVLVLTVTVGQA). Positions 23-57 (DEDSPEASLLRKLKEAEASLFGQNLEESRNSRQKR) are excised as a propeptide. 3 disulfides stabilise this stretch: Cys58–Cys73, Cys65–Cys78, and Cys72–Cys93.

This sequence belongs to the neurotoxin 14 (magi-1) family. 08 (Ltx-4) subfamily. In terms of tissue distribution, expressed by the venom gland.

It is found in the secreted. Insecticidal neurotoxin. This chain is U2-theraphotoxin-Lsp1a, found in Lasiodora sp. (strain IBSP 8539) (Brazilian salmon pink birdeater).